The primary structure comprises 244 residues: Homeobox-leucine zipper protein HOX14 (244 aa).

Residues 25-64 are disordered; sequence ASGEVQGERPRARRRRRRGARCVGGGGGGGEVDGGDPKKR. Positions 35-44 are enriched in basic residues; sequence RARRRRRRGA. The span at 46–56 shows a compositional bias: gly residues; the sequence is CVGGGGGGGEV. The segment at residues 59 to 118 is a DNA-binding region (homeobox); that stretch reads GDPKKRRLSDEQVEMLELSFREERKLETGRKVHLASELGLDPKQVAVWFQNRRARHKSKL. The stretch at 108-167 forms a coiled coil; the sequence is QNRRARHKSKLLEEEFSKLKHAHDAAILHKCHLENEVLRLKERLVVAEEEVRRLRSAAGS.

This sequence belongs to the HD-ZIP homeobox family. Class I subfamily. As to expression, expressed in roots, stems, leaf blades and panicles.

It is found in the nucleus. Functionally, probable transcription factor. The polypeptide is Homeobox-leucine zipper protein HOX14 (HOX14) (Oryza sativa subsp. indica (Rice)).